The chain runs to 375 residues: Oleosin-B6 (375 aa).

The polar stretch occupies residues 1 to 32; sequence MKEEIQNETAQTQLQREGRMFSFLFPVIEVIK. 3 consecutive transmembrane segments (helical) span residues 21-43, 55-75, and 81-101; these read FSFLFPVIEVIKVVMASVASVVF, AVALAVSTPLFIIFSPILVPA, and LLATGLGAGTTLGVTGMGLLM. The segment at 33-112 is hydrophobic; it reads VVMASVASVV…LIKHPGKEGA (80 aa). 2 disordered regions span residues 144–284 and 303–375; these read PGVG…SFLS and IPGF…DESS. Basic and acidic residues predominate over residues 148–179; the sequence is KKSEGRGESKGKKGKKGKSEHGRGKHEGEGKS. The span at 193 to 210 shows a compositional bias: pro residues; it reads NNPPPAGAPPTGSPPAAP. 23 consecutive repeat copies span residues 207 to 209, 210 to 212, 213 to 215, 216 to 218, 219 to 221, 222 to 224, 225 to 227, 228 to 230, 231 to 233, 234 to 236, 237 to 239, 240 to 242, 243 to 245, 246 to 248, 249 to 251, 252 to 254, 255 to 257, 258 to 260, 261 to 263, 264 to 266, 267 to 269, 270 to 272, and 273 to 275. The interval 207 to 275 is 23 X 3 AA approximate tandem repeats of P-A-A; the sequence is PAAPAAPEAP…APAAPPAPAA (69 aa). Positions 211 to 251 are enriched in low complexity; sequence AAPEAPAAPAAPAAPAAPAAPAAPAAPEDPAAPAAPEAPAT. A compositionally biased stretch (pro residues) spans 252-280; that stretch reads PAAPPAPAAAPAPAAPAAPPAPAAPPRPP. A compositionally biased stretch (basic residues) spans 316-331; it reads SKGGKKSKGKGKSNGR.

It belongs to the oleosin family. As to expression, the full-length protein is found in the tapetal lipid bodies of immature anthers, the proteolytically cleaved C-terminal product is found on the coats of pollen grains. Not found in flowers, developing embryos or leaf tissue.

The protein localises to the lipid droplet. It is found in the membrane. Its function is as follows. Many of the major pollen coat proteins are derived from endoproteolytic cleavage of oleosin-like proteins. The sequence is that of Oleosin-B6 from Brassica napus (Rape).